The following is a 368-amino-acid chain: Nuclease EXOG, mitochondrial (368 aa).

Residues 1–41 constitute a mitochondrion transit peptide; it reads MAAKSFASRLRDSRRFLNGFLAGAVVGAAGAGLTALQFFRR. Catalysis depends on His-140, which acts as the Proton acceptor. A divalent metal cation is bound at residue Asn-171.

Belongs to the DNA/RNA non-specific endonuclease family. As to quaternary structure, homodimer. The cofactor is a divalent metal cation.

The protein localises to the mitochondrion inner membrane. Functionally, endo/exonuclease with nicking activity towards supercoiled DNA, a preference for single-stranded DNA and 5'-3' exonuclease activity. This Mus musculus (Mouse) protein is Nuclease EXOG, mitochondrial (Exog).